Reading from the N-terminus, the 682-residue chain is Serine/threonine-protein kinase PLK2 (682 aa).

The disordered stretch occupies residues 25-67 (ACGGDSKKKRPQQPSEDGQPQAQVTPAAPHHHHHHSHSGPEIS). Over residues 36 to 48 (QQPSEDGQPQAQV) the composition is skewed to polar residues. A Protein kinase domain is found at 79–331 (YCRGKVLGKG…LDDIIRHDFF (253 aa)). ATP contacts are provided by residues 85–93 (LGKGGFAKC) and Lys108. The active-site Proton acceptor is Asp202. The residue at position 236 (Thr236) is a Phosphothreonine. Residues 403–432 (SITQQPSKHRADEEPQPPPTTVARSGTSAV) are disordered. 2 consecutive POLO box domains span residues 500-578 (WVTK…YMEE) and 598-682 (YLLQ…QRCN).

The protein belongs to the protein kinase superfamily. Ser/Thr protein kinase family. CDC5/Polo subfamily. Interacts with NSF; causing NSF dissociation from GRIA2. Interacts with CIB1. Catalytic activity is enhanced by phosphorylation of Thr-236. Brain, lung and heart.

The protein localises to the cytoplasm. It is found in the cytoskeleton. It localises to the microtubule organizing center. The protein resides in the centrosome. Its subcellular location is the centriole. The protein localises to the cell projection. It is found in the dendrite. It carries out the reaction L-seryl-[protein] + ATP = O-phospho-L-seryl-[protein] + ADP + H(+). The enzyme catalyses L-threonyl-[protein] + ATP = O-phospho-L-threonyl-[protein] + ADP + H(+). Its activity is regulated as follows. Activated by phosphorylation of Thr-236. Once activated, activity is stimulated by binding target proteins. Tumor suppressor serine/threonine-protein kinase involved in synaptic plasticity, centriole duplication and G1/S phase transition. Polo-like kinases act by binding and phosphorylating proteins that are already phosphorylated on a specific motif recognized by the POLO box domains. Phosphorylates CPAP, NPM1, RAPGEF2, RASGRF1, SNCA, SIPA1L1 and SYNGAP1. Plays a key role in synaptic plasticity and memory by regulating the Ras and Rap protein signaling: required for overactivity-dependent spine remodeling by phosphorylating the Ras activator RASGRF1 and the Rap inhibitor SIPA1L1 leading to their degradation by the proteasome. Conversely, phosphorylates the Rap activator RAPGEF2 and the Ras inhibitor SYNGAP1, promoting their activity. Also regulates synaptic plasticity independently of kinase activity, via its interaction with NSF that disrupts the interaction between NSF and the GRIA2 subunit of AMPARs, leading to a rapid rundown of AMPAR-mediated current that occludes long term depression. Required for procentriole formation and centriole duplication by phosphorylating CPAP and NPM1, respectively. Its induction by p53/TP53 suggests that it may participate in the mitotic checkpoint following stress. The protein is Serine/threonine-protein kinase PLK2 (Plk2) of Mus musculus (Mouse).